A 206-amino-acid polypeptide reads, in one-letter code: MARYLGPKLKLSRREGTDLFLKSGVRAIDTKCKIDTAPGQHGARKPRLSDYGSQLREKQKVRRIYGILERQFRNYYKEANRLKGNTGENLLVLLEGRLDNVVYRMGFAATRAEARQLVSHKAIVVNGRVVNIPSFQVSVNDVVAVREKSKKQARIKASLELAEQREKPTWLEVEAAKMEGVFKRVPERSDLSADINEHLIVELYSK.

Residues 96 to 156 (GRLDNVVYRM…EKSKKQARIK (61 aa)) enclose the S4 RNA-binding domain.

It belongs to the universal ribosomal protein uS4 family. As to quaternary structure, part of the 30S ribosomal subunit. Contacts protein S5. The interaction surface between S4 and S5 is involved in control of translational fidelity.

Its function is as follows. One of the primary rRNA binding proteins, it binds directly to 16S rRNA where it nucleates assembly of the body of the 30S subunit. With S5 and S12 plays an important role in translational accuracy. The protein is Small ribosomal subunit protein uS4 of Histophilus somni (strain 2336) (Haemophilus somnus).